Here is a 347-residue protein sequence, read N- to C-terminus: S-adenosylmethionine:tRNA ribosyltransferase-isomerase (347 aa).

Belongs to the QueA family. Monomer.

It localises to the cytoplasm. The enzyme catalyses 7-aminomethyl-7-carbaguanosine(34) in tRNA + S-adenosyl-L-methionine = epoxyqueuosine(34) in tRNA + adenine + L-methionine + 2 H(+). The protein operates within tRNA modification; tRNA-queuosine biosynthesis. Functionally, transfers and isomerizes the ribose moiety from AdoMet to the 7-aminomethyl group of 7-deazaguanine (preQ1-tRNA) to give epoxyqueuosine (oQ-tRNA). The polypeptide is S-adenosylmethionine:tRNA ribosyltransferase-isomerase (Halalkalibacterium halodurans (strain ATCC BAA-125 / DSM 18197 / FERM 7344 / JCM 9153 / C-125) (Bacillus halodurans)).